The sequence spans 265 residues: tRNA pseudouridine synthase A (265 aa).

Residue D58 is the Nucleophile of the active site. Y116 contacts substrate.

Belongs to the tRNA pseudouridine synthase TruA family. In terms of assembly, homodimer.

It catalyses the reaction uridine(38/39/40) in tRNA = pseudouridine(38/39/40) in tRNA. In terms of biological role, formation of pseudouridine at positions 38, 39 and 40 in the anticodon stem and loop of transfer RNAs. This Neisseria meningitidis serogroup C (strain 053442) protein is tRNA pseudouridine synthase A.